A 215-amino-acid polypeptide reads, in one-letter code: ATP-dependent dethiobiotin synthetase BioD (215 aa).

ATP is bound at residue 13–18; sequence DIGKTV. A Mg(2+)-binding site is contributed by threonine 17. Lysine 38 is an active-site residue. Residue threonine 42 coordinates substrate. ATP contacts are provided by residues aspartate 50, 115–118, and 175–176; these read EGAG and NH. Residues aspartate 50 and glutamate 115 each contribute to the Mg(2+) site.

It belongs to the dethiobiotin synthetase family. In terms of assembly, homodimer. The cofactor is Mg(2+).

The protein resides in the cytoplasm. The enzyme catalyses (7R,8S)-7,8-diammoniononanoate + CO2 + ATP = (4R,5S)-dethiobiotin + ADP + phosphate + 3 H(+). The protein operates within cofactor biosynthesis; biotin biosynthesis; biotin from 7,8-diaminononanoate: step 1/2. Its function is as follows. Catalyzes a mechanistically unusual reaction, the ATP-dependent insertion of CO2 between the N7 and N8 nitrogen atoms of 7,8-diaminopelargonic acid (DAPA, also called 7,8-diammoniononanoate) to form a ureido ring. The polypeptide is ATP-dependent dethiobiotin synthetase BioD (Neisseria meningitidis serogroup C / serotype 2a (strain ATCC 700532 / DSM 15464 / FAM18)).